We begin with the raw amino-acid sequence, 314 residues long: Hydroxyethylthiazole kinase (314 aa).

Position 70 (Met70) interacts with substrate. The ATP site is built by Arg145 and Ser217. Gly244 provides a ligand contact to substrate.

It belongs to the Thz kinase family. Mg(2+) is required as a cofactor.

The enzyme catalyses 5-(2-hydroxyethyl)-4-methylthiazole + ATP = 4-methyl-5-(2-phosphooxyethyl)-thiazole + ADP + H(+). It functions in the pathway cofactor biosynthesis; thiamine diphosphate biosynthesis; 4-methyl-5-(2-phosphoethyl)-thiazole from 5-(2-hydroxyethyl)-4-methylthiazole: step 1/1. In terms of biological role, catalyzes the phosphorylation of the hydroxyl group of 4-methyl-5-beta-hydroxyethylthiazole (THZ). This chain is Hydroxyethylthiazole kinase, found in Bifidobacterium longum (strain DJO10A).